The sequence spans 353 residues: Photosystem II D2 protein (353 aa).

The chain crosses the membrane as a helical span at residues 41–61; it reads TAYLALGGWLTGTTFVTSWYT. Residue histidine 118 coordinates chlorophyll a. A helical membrane pass occupies residues 125-141; that stretch reads GFMLRQFEISRLVGIRP. Positions 130 and 143 each coordinate pheophytin a. Residues 153–166 form a helical membrane-spanning segment; sequence VFVSVFLMYPLGQS. Histidine 198 serves as a coordination point for chlorophyll a. Residues 208-228 form a helical membrane-spanning segment; that stretch reads GALLCAIHGATVENTLYEDGE. A plastoquinone contacts are provided by histidine 215 and phenylalanine 262. Histidine 215 contacts Fe cation. Position 269 (histidine 269) interacts with Fe cation. A helical membrane pass occupies residues 279–295; sequence GLWTSSIGIIGLALNLR.

This sequence belongs to the reaction center PufL/M/PsbA/D family. In terms of assembly, PSII is composed of 1 copy each of membrane proteins PsbA, PsbB, PsbC, PsbD, PsbE, PsbF, PsbH, PsbI, PsbJ, PsbK, PsbL, PsbM, PsbT, PsbX, PsbY, PsbZ, Psb30/Ycf12, peripheral proteins PsbO, CyanoQ (PsbQ), PsbU, PsbV and a large number of cofactors. It forms dimeric complexes. Requires The D1/D2 heterodimer binds P680, chlorophylls that are the primary electron donor of PSII, and subsequent electron acceptors. It shares a non-heme iron and each subunit binds pheophytin, quinone, additional chlorophylls, carotenoids and lipids. There is also a Cl(-1) ion associated with D1 and D2, which is required for oxygen evolution. The PSII complex binds additional chlorophylls, carotenoids and specific lipids. as cofactor.

The protein localises to the host cellular thylakoid membrane. It carries out the reaction 2 a plastoquinone + 4 hnu + 2 H2O = 2 a plastoquinol + O2. Functionally, photosystem II (PSII) is a light-driven water:plastoquinone oxidoreductase that uses light energy to abstract electrons from H(2)O, generating O(2) and a proton gradient subsequently used for ATP formation. It consists of a core antenna complex that captures photons, and an electron transfer chain that converts photonic excitation into a charge separation. The D1/D2 (PsbA/PsbD) reaction center heterodimer binds P680, the primary electron donor of PSII as well as several subsequent electron acceptors. D2 is needed for assembly of a stable PSII complex. This chain is Photosystem II D2 protein (psbD), found in Synechococcus phage S-PM2.